Consider the following 193-residue polypeptide: Non-specific lipid transfer protein GPI-anchored 10 (193 aa).

A signal peptide spans 1–24 (MASSTLLITLLISLSAFFLRMVLA). Intrachain disulfides connect Cys30-Cys71, Cys40-Cys55, Cys56-Cys98, and Cys69-Cys107. Residues Asn76, Asn87, and Asn103 are each glycosylated (N-linked (GlcNAc...) asparagine). The tract at residues 109 to 140 (SSFPGEAPSDSSSVAPPPSSSTGSQISQGAKN) is disordered. Residues 116–132 (PSDSSSVAPPPSSSTGS) are compositionally biased toward low complexity. A glycan (N-linked (GlcNAc...) asparagine) is linked at Asn140. The GPI-anchor amidated serine moiety is linked to residue Ser168. The propeptide at 169–193 (SGSKSEIQLTIFALAAILPAALLLI) is removed in mature form.

Belongs to the plant LTP family.

It is found in the cell membrane. Functionally, probable lipid transfer protein. This is Non-specific lipid transfer protein GPI-anchored 10 from Arabidopsis thaliana (Mouse-ear cress).